The chain runs to 336 residues: N6-methyladenosine RNA methyltransferase MTA1 (336 aa).

A disordered region spans residues 61–83; the sequence is LISSEPPHLPFKTPEPKAGSGGL.

The protein belongs to the MT-A70-like family.

The enzyme catalyses an adenosine in mRNA + S-adenosyl-L-methionine = an N(6)-methyladenosine in mRNA + S-adenosyl-L-homocysteine + H(+). In terms of biological role, N6-methyladenosine RNA methyltransferase that plays a crucial role in fungal phenotypic traits, virulence, and stress tolerance. Mediates the methylation of mRNAs to produce N6-methyladenosine (m6A)-containing mRNAs. M6A is a modification present at internal sites of mRNAs and some non-coding RNAs and plays a role in mRNA stability and processing. Mediates specifically acid phosphatase APHA mRNA stability through a YTHDF1-dependent m6A modification of the A1306, A1341, and A1666 key methylation modification sites. Also mediates the stability of the transcription factor ZAP1 mRNA via modification of residue A1935 localized in the 3'UTR. In Cryphonectria parasitica (strain ATCC 38755 / EP155), this protein is N6-methyladenosine RNA methyltransferase MTA1.